Reading from the N-terminus, the 139-residue chain is 3-hydroxyacyl-[acyl-carrier-protein] dehydratase FabZ (139 aa).

Histidine 46 is an active-site residue.

The protein belongs to the thioester dehydratase family. FabZ subfamily.

Its subcellular location is the cytoplasm. The enzyme catalyses a (3R)-hydroxyacyl-[ACP] = a (2E)-enoyl-[ACP] + H2O. Functionally, involved in unsaturated fatty acids biosynthesis. Catalyzes the dehydration of short chain beta-hydroxyacyl-ACPs and long chain saturated and unsaturated beta-hydroxyacyl-ACPs. This Streptococcus pyogenes serotype M1 protein is 3-hydroxyacyl-[acyl-carrier-protein] dehydratase FabZ.